Here is a 309-residue protein sequence, read N- to C-terminus: Tagatose-6-phosphate kinase (309 aa).

Belongs to the carbohydrate kinase PfkB family. LacC subfamily.

The catalysed reaction is D-tagatofuranose 6-phosphate + ATP = D-tagatofuranose 1,6-bisphosphate + ADP + H(+). It participates in carbohydrate metabolism; D-tagatose 6-phosphate degradation; D-glyceraldehyde 3-phosphate and glycerone phosphate from D-tagatose 6-phosphate: step 1/2. The polypeptide is Tagatose-6-phosphate kinase (Streptococcus pneumoniae (strain 70585)).